A 352-amino-acid chain; its full sequence is Fe(3+) ions import ATP-binding protein FbpC (352 aa).

The ABC transporter domain occupies 5–239; the sequence is LHIGHLSKSF…PADLDAALFI (235 aa). ATP is bound at residue 37-44; the sequence is GASGCGKT.

This sequence belongs to the ABC transporter superfamily. Fe(3+) ion importer (TC 3.A.1.10) family. As to quaternary structure, the complex is composed of two ATP-binding proteins (FbpC), two transmembrane proteins (FbpB) and a solute-binding protein (FbpA).

Its subcellular location is the cell inner membrane. It carries out the reaction Fe(3+)(out) + ATP + H2O = Fe(3+)(in) + ADP + phosphate + H(+). Functionally, part of the ABC transporter complex FbpABC involved in Fe(3+) ions import. Responsible for energy coupling to the transport system. The sequence is that of Fe(3+) ions import ATP-binding protein FbpC from Neisseria meningitidis serogroup A / serotype 4A (strain DSM 15465 / Z2491).